The following is a 120-amino-acid chain: Prefoldin subunit beta (120 aa).

Belongs to the prefoldin subunit beta family. As to quaternary structure, heterohexamer of two alpha and four beta subunits.

It localises to the cytoplasm. Its function is as follows. Molecular chaperone capable of stabilizing a range of proteins. Seems to fulfill an ATP-independent, HSP70-like function in archaeal de novo protein folding. The polypeptide is Prefoldin subunit beta (Methanothrix thermoacetophila (strain DSM 6194 / JCM 14653 / NBRC 101360 / PT) (Methanosaeta thermophila)).